A 198-amino-acid chain; its full sequence is Probable opine utilization operon repressor (198 aa).

It functions in the pathway opine metabolism; mannopine biosynthesis [regulation]. Possible repressor for genes for mannityl-opine utilization and / or plasmid conjugative transfer. The protein is Probable opine utilization operon repressor (opnR) of Rhizobium rhizogenes (Agrobacterium rhizogenes).